Reading from the N-terminus, the 107-residue chain is Small ribosomal subunit protein bS16m (107 aa).

It belongs to the bacterial ribosomal protein bS16 family. In terms of assembly, component of the mitochondrial small ribosomal subunit (mt-SSU). Mature N.crassa 74S mitochondrial ribosomes consist of a small (37S) and a large (54S) subunit. The 37S small subunit contains a 16S ribosomal RNA (16S mt-rRNA) and 32 different proteins. The 54S large subunit contains a 23S rRNA (23S mt-rRNA) and 42 different proteins.

The protein localises to the mitochondrion. Its function is as follows. Component of the mitochondrial ribosome (mitoribosome), a dedicated translation machinery responsible for the synthesis of mitochondrial genome-encoded proteins, including at least some of the essential transmembrane subunits of the mitochondrial respiratory chain. The mitoribosomes are attached to the mitochondrial inner membrane and translation products are cotranslationally integrated into the membrane. This Neurospora crassa (strain ATCC 24698 / 74-OR23-1A / CBS 708.71 / DSM 1257 / FGSC 987) protein is Small ribosomal subunit protein bS16m (cyt-21).